The following is a 269-amino-acid chain: Aegyptin-like protein (269 aa).

Residues 1–19 form the signal peptide; it reads MKLLLLLASVLCLALIVSA. Residues 19–152 are disordered; it reads ARPSDETTDQ…GGAEGGEESP (134 aa). Residues 38 to 148 are GE-rich region which mediates binding of Ca(2+); the sequence is TSDSYHQEED…AGEEGGAEGG (111 aa). 3 stretches are compositionally biased toward acidic residues: residues 56–73, 98–121, and 131–149; these read GTED…ESSS, GEED…EGGA, and GGAD…EGGE. The mediates binding of host collagen and inhibition of platelet aggregation stretch occupies residues 148 to 269; sequence GEESPVNTYH…DCIVEKRDSE (122 aa). 2 disulfide bridges follow: Cys-208-Cys-261 and Cys-230-Cys-239.

Belongs to the aegyptin family. In terms of tissue distribution, female saliva (at protein level). Distal lateral lobes of female salivary gland (at protein level). Low-level expression in male salivary gland. Not detected in female and male carcasses.

It is found in the secreted. Modulates blood feeding of female mosquitoes on vertebrate hosts. Inhibits collagen-induced platelet aggregation in the host via preventing collagen interaction with its ligands: glycoprotein VI and integrin alpha-2/beta-1 (ITGA2/ITGB1). Inhibits collagen-induced increase of Ca(2+) levels in host platelets. Binds to host collagens. Binds Ca(2+). Prevents a decrease in platelet count in the host blood after collagen injection. Its function is as follows. (Microbial infection) Does not affect the development of Plasmodium berghei parasites in mosquitoes. This Anopheles stephensi (Indo-Pakistan malaria mosquito) protein is Aegyptin-like protein.